The chain runs to 74 residues: Ubiquitin-like protein FUBI (74 aa).

The protein belongs to the ubiquitin family.

The sequence is that of Ubiquitin-like protein FUBI (Fau) from Rattus norvegicus (Rat).